Here is an 87-residue protein sequence, read N- to C-terminus: HssA/B-like protein 56 (87 aa).

It belongs to the hssA/B family.

This chain is HssA/B-like protein 56 (hssl56), found in Dictyostelium discoideum (Social amoeba).